A 325-amino-acid chain; its full sequence is Interferon regulatory factor 1 (325 aa).

A DNA-binding region (IRF tryptophan pentad repeat) is located at residues 5–113 (RMRMRPWLEM…SAVRVYRMLP (109 aa)). The residue at position 78 (K78) is an N6-acetyllysine. The disordered stretch occupies residues 92 to 165 (EEVKDQSRNK…TLPDDHSSYT (74 aa)). A compositionally biased stretch (polar residues) spans 141–157 (GDSSPDTFSDGLSSSTL). Glycyl lysine isopeptide (Lys-Gly) (interchain with G-Cter in SUMO) cross-links involve residues K275 and K299.

It belongs to the IRF family. In terms of assembly, monomer. Homodimer. Interacts with EP300. Interacts with MYD88. Interacts with PIAS3. Interacts with SPOP. Post-translationally, phosphorylated by CK2 and this positively regulates its activity. In terms of processing, sumoylation represses the transcriptional activity and displays enhanced resistance to protein degradation. Sumoylated by UBE2I/UBC9 and SUMO1. Inactivates the tumor suppressor activity. Elevated levels in tumor cells. Major site is Lys-275. Sumoylation is enhanced by PIAS3. Desumoylated by SENP1 in tumor cells and appears to compete with ubiquitination on C-terminal sites. Ubiquitinated in a SPOP-depedent manner. Appears to compete with sumoylation on C-terminal sites.

It is found in the nucleus. It localises to the cytoplasm. Its activity is regulated as follows. Activated by MYD88. In terms of biological role, transcriptional regulator which displays a remarkable functional diversity in the regulation of cellular responses. Regulates transcription of IFN and IFN-inducible genes, host response to viral and bacterial infections, regulation of many genes expressed during hematopoiesis, inflammation, immune responses and cell proliferation and differentiation, regulation of the cell cycle and induction of growth arrest and programmed cell death following DNA damage. Stimulates both innate and acquired immune responses through the activation of specific target genes and can act as a transcriptional activator and repressor regulating target genes by binding to an interferon-stimulated response element (ISRE) in their promoters. Has an essentail role in IFNG-dependent immunity to mycobacteria. Competes with the transcriptional repressor ZBED2 for binding to a common consensus sequence in gene promoters. Its target genes for transcriptional activation activity include: genes involved in anti-viral response, such as IFN-alpha/beta, RIGI, TNFSF10/TRAIL, ZBP1, OAS1/2, PIAS1/GBP, EIF2AK2/PKR and RSAD2/viperin; antibacterial response, such as GBP2, GBP5 and NOS2/INOS; anti-proliferative response, such as p53/TP53, LOX and CDKN1A; apoptosis, such as BBC3/PUMA, CASP1, CASP7 and CASP8; immune response, such as IL7, IL12A/B and IL15, PTGS2/COX2 and CYBB; DNA damage responses and DNA repair, such as POLQ/POLH; MHC class I expression, such as TAP1, PSMB9/LMP2, PSME1/PA28A, PSME2/PA28B and B2M and MHC class II expression, such as CIITA; metabolic enzymes, such as ACOD1/IRG1. Represses genes involved in anti-proliferative response, such as BIRC5/survivin, CCNB1, CCNE1, CDK1, CDK2 and CDK4 and in immune response, such as FOXP3, IL4, ANXA2 and TLR4. Stimulates p53/TP53-dependent transcription through enhanced recruitment of EP300 leading to increased acetylation of p53/TP53. Plays an important role in immune response directly affecting NK maturation and activity, macrophage production of IL12, Th1 development and maturation of CD8+ T-cells. Also implicated in the differentiation and maturation of dendritic cells and in the suppression of regulatory T (Treg) cells development. Acts as a tumor suppressor and plays a role not only in antagonism of tumor cell growth but also in stimulating an immune response against tumor cells. This chain is Interferon regulatory factor 1 (IRF1), found in Homo sapiens (Human).